The following is a 422-amino-acid chain: Tyrosine--tRNA ligase (422 aa).

L-tyrosine is bound at residue Tyr36. The 'HIGH' region signature appears at 41–50; the sequence is PTAGSLHIGH. L-tyrosine is bound by residues Tyr174 and Gln178. The short motif at 234–238 is the 'KMSKS' region element; sequence KFGKT. Position 237 (Lys237) interacts with ATP. In terms of domain architecture, S4 RNA-binding spans 356–420; that stretch reads TDLVTLLVES…GKKQYRLVTW (65 aa).

The protein belongs to the class-I aminoacyl-tRNA synthetase family. TyrS type 1 subfamily. In terms of assembly, homodimer.

Its subcellular location is the cytoplasm. It catalyses the reaction tRNA(Tyr) + L-tyrosine + ATP = L-tyrosyl-tRNA(Tyr) + AMP + diphosphate + H(+). Catalyzes the attachment of tyrosine to tRNA(Tyr) in a two-step reaction: tyrosine is first activated by ATP to form Tyr-AMP and then transferred to the acceptor end of tRNA(Tyr). In Aeromonas hydrophila subsp. hydrophila (strain ATCC 7966 / DSM 30187 / BCRC 13018 / CCUG 14551 / JCM 1027 / KCTC 2358 / NCIMB 9240 / NCTC 8049), this protein is Tyrosine--tRNA ligase.